Here is a 133-residue protein sequence, read N- to C-terminus: Ribosomal RNA large subunit methyltransferase H 1 (133 aa).

S-adenosyl-L-methionine contacts are provided by residues isoleucine 55, glycine 89, and isoleucine 101 to methionine 106.

It belongs to the RNA methyltransferase RlmH family. As to quaternary structure, homodimer.

Its subcellular location is the cytoplasm. It carries out the reaction pseudouridine(1915) in 23S rRNA + S-adenosyl-L-methionine = N(3)-methylpseudouridine(1915) in 23S rRNA + S-adenosyl-L-homocysteine + H(+). Specifically methylates the pseudouridine at position 1915 (m3Psi1915) in 23S rRNA. The protein is Ribosomal RNA large subunit methyltransferase H 1 of Thermoanaerobacter sp. (strain X514).